The primary structure comprises 364 residues: Cyclin-D3-2 (364 aa).

Positions 331–364 (PPGRPIKRGAAAATTADPLPADEESRDAWPPYAA) are disordered. Low complexity predominate over residues 340–349 (AAAATTADPL).

Belongs to the cyclin family. Cyclin D subfamily.

The polypeptide is Cyclin-D3-2 (CYCD3-2) (Oryza sativa subsp. japonica (Rice)).